Reading from the N-terminus, the 248-residue chain is UPF0736 protein BT9727_1080 (248 aa).

This sequence belongs to the UPF0736 family.

This is UPF0736 protein BT9727_1080 from Bacillus thuringiensis subsp. konkukian (strain 97-27).